The chain runs to 328 residues: Phenylalanine--tRNA ligase alpha subunit (328 aa).

Residue Glu245 coordinates Mg(2+).

The protein belongs to the class-II aminoacyl-tRNA synthetase family. Phe-tRNA synthetase alpha subunit type 1 subfamily. As to quaternary structure, tetramer of two alpha and two beta subunits. Requires Mg(2+) as cofactor.

It is found in the cytoplasm. It catalyses the reaction tRNA(Phe) + L-phenylalanine + ATP = L-phenylalanyl-tRNA(Phe) + AMP + diphosphate + H(+). The chain is Phenylalanine--tRNA ligase alpha subunit from Helicobacter pylori (strain G27).